Reading from the N-terminus, the 63-residue chain is Adipokinetic prohormone type 1 (63 aa).

The first 22 residues, 1–22, serve as a signal peptide directing secretion; it reads MVQRCLVVALLVVVVAAALCSA. The residue at position 23 (glutamine 23) is a Pyrrolidone carboxylic acid. The residue at position 32 (threonine 32) is a Threonine amide.

The protein belongs to the AKH/HRTH/RPCH family. In terms of assembly, adipokinetic hormone precursor-related peptide (APRP) can form three type of disulfide-bond dimers: p1 (alpha-alpha), p2 (alpha-beta), and p3 (beta-beta).

The protein resides in the secreted. In terms of biological role, this hormone, released from cells in the corpora cardiaca, causes release of diglycerides from the fat body and stimulation of muscles to use these diglycerides as an energy source during energy-demanding processes. The polypeptide is Adipokinetic prohormone type 1 (Schistocerca nitens (Vagrant locust)).